Consider the following 600-residue polypeptide: Glutamine--fructose-6-phosphate aminotransferase [isomerizing] (600 aa).

C2 functions as the Nucleophile; for GATase activity in the catalytic mechanism. One can recognise a Glutamine amidotransferase type-2 domain in the interval 2 to 217; that stretch reads CGIVGYIGQL…DKEMVIVTDK (216 aa). SIS domains lie at 283–422 and 452–590; these read ISNA…SRGK and IARE…VDKP. The active-site For Fru-6P isomerization activity is K595.

Homodimer.

Its subcellular location is the cytoplasm. The enzyme catalyses D-fructose 6-phosphate + L-glutamine = D-glucosamine 6-phosphate + L-glutamate. In terms of biological role, catalyzes the first step in hexosamine metabolism, converting fructose-6P into glucosamine-6P using glutamine as a nitrogen source. The polypeptide is Glutamine--fructose-6-phosphate aminotransferase [isomerizing] (Bacillus licheniformis (strain ATCC 14580 / DSM 13 / JCM 2505 / CCUG 7422 / NBRC 12200 / NCIMB 9375 / NCTC 10341 / NRRL NRS-1264 / Gibson 46)).